Consider the following 758-residue polypeptide: Calcium up-regulated protein E (758 aa).

Residues 1–22 are disordered; the sequence is MINIEDISKSSNQSEEKQLKST. 2 Ricin B-type lectin domains span residues 25–145 and 156–288; these read KPKY…WTTF and GYFQ…WIAN.

The protein belongs to the cup family.

It localises to the cytoplasm. It is found in the membrane. May play an important role in stabilizing and/or regulating the cell membrane during Ca(2+) stress or certain stages of development. The sequence is that of Calcium up-regulated protein E (cupE) from Dictyostelium discoideum (Social amoeba).